Here is a 222-residue protein sequence, read N- to C-terminus: Exosome complex component Rrp4 (222 aa).

One can recognise an S1 motif domain in the interval 63-131; the sequence is NDSVIGKVVD…EVKKVKLGLH (69 aa). A KH domain is found at 139-200; that stretch reads EGGTLAYITP…EIVKRALEMI (62 aa).

The protein belongs to the RRP4 family. Component of the archaeal exosome complex. Forms a trimer of Rrp4 and/or Csl4 subunits. The trimer associates with a hexameric ring-like arrangement composed of 3 Rrp41-Rrp42 heterodimers.

The protein resides in the cytoplasm. Its function is as follows. Non-catalytic component of the exosome, which is a complex involved in RNA degradation. Increases the RNA binding and the efficiency of RNA degradation. Confers strong poly(A) specificity to the exosome. This is Exosome complex component Rrp4 from Methanothermus fervidus (strain ATCC 43054 / DSM 2088 / JCM 10308 / V24 S).